The following is a 395-amino-acid chain: Elongation factor Tu (395 aa).

Positions 10–204 (KPHVNIGTIG…TVDSYIPEPA (195 aa)) constitute a tr-type G domain. Residues 19–26 (GHVDHGKT) form a G1 region. 19–26 (GHVDHGKT) serves as a coordination point for GTP. Residue threonine 26 coordinates Mg(2+). Positions 60–64 (GITIN) are G2. Residues 81-84 (DAPG) are G3. GTP is bound by residues 81-85 (DAPGH) and 136-139 (NKTD). The segment at 136–139 (NKTD) is G4. Residues 174–176 (SAL) form a G5 region.

Belongs to the TRAFAC class translation factor GTPase superfamily. Classic translation factor GTPase family. EF-Tu/EF-1A subfamily. As to quaternary structure, monomer.

Its subcellular location is the cytoplasm. The catalysed reaction is GTP + H2O = GDP + phosphate + H(+). In terms of biological role, GTP hydrolase that promotes the GTP-dependent binding of aminoacyl-tRNA to the A-site of ribosomes during protein biosynthesis. The protein is Elongation factor Tu of Leuconostoc mesenteroides subsp. mesenteroides (strain ATCC 8293 / DSM 20343 / BCRC 11652 / CCM 1803 / JCM 6124 / NCDO 523 / NBRC 100496 / NCIMB 8023 / NCTC 12954 / NRRL B-1118 / 37Y).